The sequence spans 110 residues: Iron-sulfur cluster assembly protein CyaY (110 aa).

This sequence belongs to the frataxin family.

Its function is as follows. Involved in iron-sulfur (Fe-S) cluster assembly. May act as a regulator of Fe-S biogenesis. This chain is Iron-sulfur cluster assembly protein CyaY, found in Pseudomonas syringae pv. syringae (strain B728a).